The primary structure comprises 401 residues: Tryptophan synthase beta chain (401 aa).

At lysine 92 the chain carries N6-(pyridoxal phosphate)lysine.

The protein belongs to the TrpB family. As to quaternary structure, tetramer of two alpha and two beta chains. It depends on pyridoxal 5'-phosphate as a cofactor.

It carries out the reaction (1S,2R)-1-C-(indol-3-yl)glycerol 3-phosphate + L-serine = D-glyceraldehyde 3-phosphate + L-tryptophan + H2O. Its pathway is amino-acid biosynthesis; L-tryptophan biosynthesis; L-tryptophan from chorismate: step 5/5. Its function is as follows. The beta subunit is responsible for the synthesis of L-tryptophan from indole and L-serine. This chain is Tryptophan synthase beta chain, found in Vesicomyosocius okutanii subsp. Calyptogena okutanii (strain HA).